The following is a 338-amino-acid chain: Ketol-acid reductoisomerase (NADP(+)) (338 aa).

In terms of domain architecture, KARI N-terminal Rossmann spans M1–T181. NADP(+)-binding positions include Y24–Q27, R47, S50, S52, and D82–Q85. H107 is an active-site residue. An NADP(+)-binding site is contributed by G133. The region spanning T182–I327 is the KARI C-terminal knotted domain. Mg(2+) contacts are provided by D190, E194, E226, and E230. S251 provides a ligand contact to substrate.

This sequence belongs to the ketol-acid reductoisomerase family. Mg(2+) serves as cofactor.

The catalysed reaction is (2R)-2,3-dihydroxy-3-methylbutanoate + NADP(+) = (2S)-2-acetolactate + NADPH + H(+). It carries out the reaction (2R,3R)-2,3-dihydroxy-3-methylpentanoate + NADP(+) = (S)-2-ethyl-2-hydroxy-3-oxobutanoate + NADPH + H(+). The protein operates within amino-acid biosynthesis; L-isoleucine biosynthesis; L-isoleucine from 2-oxobutanoate: step 2/4. It functions in the pathway amino-acid biosynthesis; L-valine biosynthesis; L-valine from pyruvate: step 2/4. Its function is as follows. Involved in the biosynthesis of branched-chain amino acids (BCAA). Catalyzes an alkyl-migration followed by a ketol-acid reduction of (S)-2-acetolactate (S2AL) to yield (R)-2,3-dihydroxy-isovalerate. In the isomerase reaction, S2AL is rearranged via a Mg-dependent methyl migration to produce 3-hydroxy-3-methyl-2-ketobutyrate (HMKB). In the reductase reaction, this 2-ketoacid undergoes a metal-dependent reduction by NADPH to yield (R)-2,3-dihydroxy-isovalerate. This chain is Ketol-acid reductoisomerase (NADP(+)), found in Chromohalobacter salexigens (strain ATCC BAA-138 / DSM 3043 / CIP 106854 / NCIMB 13768 / 1H11).